Here is an 82-residue protein sequence, read N- to C-terminus: Sulfur carrier protein TusA (82 aa).

C19 (cysteine persulfide intermediate) is an active-site residue.

It belongs to the sulfur carrier protein TusA family. As to quaternary structure, interacts with IscS.

The protein resides in the cytoplasm. It functions in the pathway tRNA modification. Sulfur carrier protein involved in sulfur trafficking in the cell. Part of a sulfur-relay system required for 2-thiolation during synthesis of 2-thiouridine of the modified wobble base 5-methylaminomethyl-2-thiouridine (mnm(5)s(2)U) in tRNA. Interacts with IscS and stimulates its cysteine desulfurase activity. Accepts an activated sulfur from IscS, which is then transferred to TusD, and thus determines the direction of sulfur flow from IscS to 2-thiouridine formation. Also appears to be involved in sulfur transfer for the biosynthesis of molybdopterin. The chain is Sulfur carrier protein TusA from Edwardsiella ictaluri (strain 93-146).